The sequence spans 524 residues: mRNA cap guanine-N(7) methyltransferase (524 aa).

The interval 1–155 (MSDKEAGVAS…DKKRAHDEAE (155 aa)) is disordered. Basic and acidic residues predominate over residues 19–40 (NKDEVDVKNTEEHSKQESKSDI). Positions 68 to 77 (NNKVISSVYN) are enriched in polar residues. Basic and acidic residues predominate over residues 90–99 (KTTDKYDKYG). Residues 100–112 (SRSTPIATPTAPV) are compositionally biased toward polar residues. In terms of domain architecture, mRNA cap 0 methyltransferase spans 214-522 (SPIYKLRNFN…FYIGFVFEKL (309 aa)). Residue 223-224 (NN) coordinates mRNA. Residues K227, C251, D273, D319, Q349, and Y354 each contribute to the S-adenosyl-L-methionine site.

This sequence belongs to the class I-like SAM-binding methyltransferase superfamily. mRNA cap 0 methyltransferase family.

The protein localises to the nucleus. It catalyses the reaction a 5'-end (5'-triphosphoguanosine)-ribonucleoside in mRNA + S-adenosyl-L-methionine = a 5'-end (N(7)-methyl 5'-triphosphoguanosine)-ribonucleoside in mRNA + S-adenosyl-L-homocysteine. In terms of biological role, responsible for methylating the 5'-cap structure of mRNAs. In Debaryomyces hansenii (strain ATCC 36239 / CBS 767 / BCRC 21394 / JCM 1990 / NBRC 0083 / IGC 2968) (Yeast), this protein is mRNA cap guanine-N(7) methyltransferase (ABD1).